The sequence spans 312 residues: Pantothenate kinase (312 aa).

ATP is bound at residue 97 to 104; sequence GSVAVGKS.

This sequence belongs to the prokaryotic pantothenate kinase family.

It localises to the cytoplasm. It carries out the reaction (R)-pantothenate + ATP = (R)-4'-phosphopantothenate + ADP + H(+). It functions in the pathway cofactor biosynthesis; coenzyme A biosynthesis; CoA from (R)-pantothenate: step 1/5. This is Pantothenate kinase (coaA) from Mycobacterium leprae (strain TN).